Reading from the N-terminus, the 275-residue chain is Large ribosomal subunit protein uL2c (275 aa).

The tract at residues 223–255 is disordered; the sequence is VVMNPVDHPHGGGEGRAPIGRSRPVTPWGRPAL.

The protein belongs to the universal ribosomal protein uL2 family. Part of the 50S ribosomal subunit.

It localises to the plastid. The protein localises to the chloroplast. This Pleurastrum terricola (Filamentous green alga) protein is Large ribosomal subunit protein uL2c (rpl2).